The primary structure comprises 311 residues: F-box protein At3g18320 (311 aa).

The F-box domain occupies 1–46 (MTLPELPKDLVEEILCFVPATSLKRLRSTCKGWNRLFKDDKRFARK).

The chain is F-box protein At3g18320 from Arabidopsis thaliana (Mouse-ear cress).